Here is a 373-residue protein sequence, read N- to C-terminus: Alanine racemase (373 aa).

Catalysis depends on lysine 40, which acts as the Proton acceptor; specific for D-alanine. Lysine 40 carries the post-translational modification N6-(pyridoxal phosphate)lysine. Arginine 140 contributes to the substrate binding site. Tyrosine 268 acts as the Proton acceptor; specific for L-alanine in catalysis. Residue methionine 315 coordinates substrate.

It belongs to the alanine racemase family. It depends on pyridoxal 5'-phosphate as a cofactor.

The catalysed reaction is L-alanine = D-alanine. It functions in the pathway amino-acid biosynthesis; D-alanine biosynthesis; D-alanine from L-alanine: step 1/1. Its function is as follows. Catalyzes the interconversion of L-alanine and D-alanine. May also act on other amino acids. The polypeptide is Alanine racemase (alr) (Levilactobacillus brevis (strain ATCC 367 / BCRC 12310 / CIP 105137 / JCM 1170 / LMG 11437 / NCIMB 947 / NCTC 947) (Lactobacillus brevis)).